Here is a 252-residue protein sequence, read N- to C-terminus: MKKTKTMVASISTLIRRTYPSTNQCNSLATIQSQTQLPRESLQHHSSAEGRLRFSGRVFCSESGAGCWNCGEKAAFLFCNSCRSIQPVDDSVDYFQIFGLEKKYEIDPGSLEGKYKDWQKKLHPDLVHNKSKKERDYAAEQSAKVTEACRTLTKRLSRAMYIMKLNGVNVNEEETITDPTLLMEIMELREAISEADDSTSLNQIRSQVQEKLKQWSDSFVEAFESQKFDDAVKCIQRMTYYERACEEILKKL.

A mitochondrion-targeting transit peptide spans 1 to 59; the sequence is MKKTKTMVASISTLIRRTYPSTNQCNSLATIQSQTQLPRESLQHHSSAEGRLRFSGRVF. The J domain occupies 93 to 165; the sequence is DYFQIFGLEK…LSRAMYIMKL (73 aa).

This sequence belongs to the HscB family. Interacts with ISU1 and HSP70-9/HSCA1.

The protein resides in the mitochondrion. Its subcellular location is the cytoplasm. It is found in the cytosol. Its function is as follows. Co-chaperone required for the assembly of iron-sulfur [Fe-S] clusters in both mitochondria and cytosol. Required for the activity of iron-sulfur proteins such as aconitase and succinate dehydrogenase. Involved in iron homeostasis and may take part in the control of iron translocation from roots to shoots. This Arabidopsis thaliana (Mouse-ear cress) protein is Iron-sulfur cluster co-chaperone protein HscB homolog.